The chain runs to 113 residues: GFPIPDPYCWDISFRTFYTIVDDEHKTLFNGILLLSQADNADHLNELRRCTGKHFLNEQQLMQASQYAGYAEHKKAHDDFIHKLDTWDGDVTYAKNWLVNHIKTIDFKYRGKI.

Fe cation contacts are provided by His-25, His-54, Glu-58, His-73, His-77, His-101, and Asp-106.

The protein belongs to the hemerythrin family. Homooctamer.

Functionally, hemerythrin is a respiratory protein in blood cells of certain marine worms. The oxygen-binding site in each chain contains two iron atoms. In Themiste dyscrita (Peanut worm), this protein is Hemerythrin.